Here is a 495-residue protein sequence, read N- to C-terminus: Glycerol kinase (495 aa).

Thr14 contributes to the ADP binding site. 3 residues coordinate ATP: Thr14, Thr15, and Ser16. Thr14 contacts sn-glycerol 3-phosphate. Residue Arg18 coordinates ADP. Positions 84, 85, 136, and 246 each coordinate sn-glycerol 3-phosphate. Glycerol contacts are provided by Arg84, Glu85, Tyr136, Asp246, and Gln247. ADP contacts are provided by Thr268 and Gly312. ATP contacts are provided by Thr268, Gly312, Gln316, and Gly413. ADP contacts are provided by Gly413 and Asn417.

Belongs to the FGGY kinase family.

The catalysed reaction is glycerol + ATP = sn-glycerol 3-phosphate + ADP + H(+). It participates in polyol metabolism; glycerol degradation via glycerol kinase pathway; sn-glycerol 3-phosphate from glycerol: step 1/1. Its activity is regulated as follows. Inhibited by fructose 1,6-bisphosphate (FBP). Its function is as follows. Key enzyme in the regulation of glycerol uptake and metabolism. Catalyzes the phosphorylation of glycerol to yield sn-glycerol 3-phosphate. This chain is Glycerol kinase, found in Bdellovibrio bacteriovorus (strain ATCC 15356 / DSM 50701 / NCIMB 9529 / HD100).